A 227-amino-acid polypeptide reads, in one-letter code: UPF0758 protein Dred_2549 (227 aa).

In terms of domain architecture, MPN spans 105-227 (IIRCPEDVCG…FTSLKSKGLI (123 aa)). His176, His178, and Asp189 together coordinate Zn(2+). The JAMM motif signature appears at 176 to 189 (HNHPSGDPTPSRED).

Belongs to the UPF0758 family.

The protein is UPF0758 protein Dred_2549 of Desulforamulus reducens (strain ATCC BAA-1160 / DSM 100696 / MI-1) (Desulfotomaculum reducens).